The chain runs to 561 residues: Carboxylesterase 1E (561 aa).

The signal sequence occupies residues 1 to 18; that stretch reads MCLYALILVFLAAFTAGG. Residues Asn-79 and Asn-107 are each glycosylated (N-linked (GlcNAc...) asparagine). Cysteines 87 and 116 form a disulfide. Ser-221 (acyl-ester intermediate) is an active-site residue. Residues Cys-273 and Cys-284 are joined by a disulfide bond. Active-site charge relay system residues include Glu-353 and His-466. A glycan (N-linked (GlcNAc...) asparagine) is linked at Asn-489. Residues 558-561 carry the Prevents secretion from ER motif; it reads HTEL.

It belongs to the type-B carboxylesterase/lipase family. Expressed in liver.

The protein resides in the endoplasmic reticulum lumen. It localises to the microsome membrane. It catalyses the reaction a carboxylic ester + H2O = an alcohol + a carboxylate + H(+). The enzyme catalyses all-trans-retinyl hexadecanoate + H2O = all-trans-retinol + hexadecanoate + H(+). Its function is as follows. Involved in the detoxification of xenobiotics and in the activation of ester and amide prodrugs. Hydrolyzes retinyl esters. This chain is Carboxylesterase 1E (Ces1e), found in Rattus norvegicus (Rat).